The chain runs to 705 residues: Lethal(3)malignant brain tumor-like protein 2 (705 aa).

The tract at residues 1–84 (MEKPRSIEET…GTPRSLDGSG (84 aa)) is disordered. Ser13 is modified (phosphoserine). Positions 15-25 (PMEEEEDDDLE) are enriched in acidic residues. The span at 38-49 (SSVGSESSSYLE) shows a compositional bias: low complexity. Residues 50–60 (ESSEAENEDRE) show a composition bias toward acidic residues. The residue at position 67 (Ser67) is a Phosphoserine. Residue Thr76 is modified to Phosphothreonine. The FCS-type zinc-finger motif lies at 81 to 116 (DGSGSEPAVCEMCGIVGTREAFFSKTKRFCSVSCSR). Residues Cys90, Cys93, Cys110, and Cys114 each contribute to the Zn(2+) site. MBT repeat units lie at residues 179-283 (FDWG…LVPP), 291-391 (TDWK…IKMS), 397-500 (MAHH…LTPP), and 508-604 (FNWE…LQPP). Ser338 is modified (phosphoserine). Residue Lys405 forms a Glycyl lysine isopeptide (Lys-Gly) (interchain with G-Cter in SUMO2) linkage. The interval 608–665 (EPATPLKAKEATKKKKKQFGKKRKRIPPTKTRPLRQGSKKPLLEDDPQGARKISSEPV) is disordered. Residues 619-634 (TKKKKKQFGKKRKRIP) show a composition bias toward basic residues. Residues Lys647, Lys659, and Lys675 each participate in a glycyl lysine isopeptide (Lys-Gly) (interchain with G-Cter in SUMO2) cross-link. Residues 680-705 (DVASPDKASSPELPVSVENIKQETDD) form a disordered region. Phosphoserine occurs at positions 683, 688, and 689. Lys700 participates in a covalent cross-link: Glycyl lysine isopeptide (Lys-Gly) (interchain with G-Cter in SUMO1); alternate. Residue Lys700 forms a Glycyl lysine isopeptide (Lys-Gly) (interchain with G-Cter in SUMO2); alternate linkage.

Part of the E2F6.com-1 complex in G0 phase composed of E2F6, MGA, MAX, TFDP1, CBX3, BAT8, EUHMTASE1, RING1, RNF2, MBLR, BAT8 and YAF2.

It is found in the nucleus. In terms of biological role, putative Polycomb group (PcG) protein. PcG proteins maintain the transcriptionally repressive state of genes, probably via a modification of chromatin, rendering it heritably changed in its expressibility. Its association with a chromatin-remodeling complex suggests that it may contribute to prevent expression of genes that trigger the cell into mitosis. Binds to monomethylated and dimethylated 'Lys-20' on histone H4. Binds histone H3 peptides that are monomethylated or dimethylated on 'Lys-4', 'Lys-9' or 'Lys-27'. This chain is Lethal(3)malignant brain tumor-like protein 2 (L3MBTL2), found in Homo sapiens (Human).